Here is a 146-residue protein sequence, read N- to C-terminus: Ribonuclease H (146 aa).

The region spanning 1–143 (MEKTITIYTD…CDELARLAIK (143 aa)) is the RNase H type-1 domain. Mg(2+) contacts are provided by Asp-10, Glu-48, Asp-70, and Asp-135.

Belongs to the RNase H family. As to quaternary structure, monomer. It depends on Mg(2+) as a cofactor.

Its subcellular location is the cytoplasm. The catalysed reaction is Endonucleolytic cleavage to 5'-phosphomonoester.. In terms of biological role, endonuclease that specifically degrades the RNA of RNA-DNA hybrids. This Chlorobaculum parvum (strain DSM 263 / NCIMB 8327) (Chlorobium vibrioforme subsp. thiosulfatophilum) protein is Ribonuclease H.